The chain runs to 224 residues: LRP chaperone MESD (224 aa).

Residues 1–29 (MAASRWLRAVLLFLCASDLLLLPPPNAYA) form the signal peptide. A chaperone domain region spans residues 1–155 (MAASRWLRAV…DRAIFMLRDG (155 aa)). Disordered regions lie at residues 28 to 49 (YAAD…IRDY) and 178 to 224 (GQMY…REDL). The interval 156 to 195 (SYAWEIKDFLVSQDRCAEVTLEGQMYPGKGGGSKEKNKTK) is escort domain. Residues 187 to 224 (GSKEKNKTKPEKAKKKEGDPKPRASKEDNRAGSRREDL) are compositionally biased toward basic and acidic residues. Asn192 is a glycosylation site (N-linked (GlcNAc...) asparagine). The Prevents secretion from ER motif lies at 221 to 224 (REDL).

This sequence belongs to the MESD family. Monomer. Interacts with LRP5; the interaction prevents LRP5 from forming aggregates and chaperones LRP6 to the plasma membrane. Interacts with LRP6; the interaction prevents LRP6 from forming aggregates and chaperones LRP6 to the plasma membrane. Interacts with LRP4; the interaction promotes glycosylation of LRP4 and its cell-surface expression. Expressed in many tissues, but not in skeletal muscles. In the retina expressed in retinal ganglion cells, inner and outer plexiform layers, photoreceptor inner and outer segments and retinal pigment epithelium (at protein level).

The protein resides in the endoplasmic reticulum. Chaperone specifically assisting the folding of beta-propeller/EGF modules within the family of low-density lipoprotein receptors (LDLRs). Acts as a modulator of the Wnt pathway through chaperoning the coreceptors of the canonical Wnt pathway, LRP5 and LRP6, to the plasma membrane. Essential for specification of embryonic polarity and mesoderm induction. Plays an essential role in neuromuscular junction (NMJ) formation by promoting cell-surface expression of LRP4. May regulate phagocytosis of apoptotic retinal pigment epithelium (RPE) cells. The chain is LRP chaperone MESD from Mus musculus (Mouse).